The following is a 238-amino-acid chain: MGRKWANIVAKKTAKDGATSKVYAKFGVEIYAAAKQGEPDPESNSSLKFVIERAKQAQVPKHVIDKAIDKAKGGGDETFVQGRYEGFGPNGSMVIAETLTSNVNRTIANVRTTFHKNGGNIGAAGAVSYMFDNTGVIVFEGTDPDHIFEILLDAEVDVRDVTEEEGNIVVYTEPTDLHKGIAALKAAGITEFSTTELEMIAQSEVELSPEDLEIFEGLVDALEDDDDVQKVYHNVANL.

It belongs to the TACO1 family. YeeN subfamily.

It localises to the cytoplasm. The polypeptide is Probable transcriptional regulatory protein llmg_0242 (Lactococcus lactis subsp. cremoris (strain MG1363)).